The chain runs to 313 residues: Short-chain dehydrogenase/reductase family 9C member 7 (313 aa).

An NADP(+)-binding site is contributed by 29–53 (FITGCDSGFGNLLAKQLVDRGMKVL). Ser160 is a binding site for substrate. Tyr172 (proton acceptor) is an active-site residue. Ser185 carries the phosphoserine modification.

The protein belongs to the short-chain dehydrogenases/reductases (SDR) family. Highly expressed in liver.

Its subcellular location is the cytoplasm. The catalysed reaction is a N-[omega-(9R,10R)-epoxy-(13R)-hydroxy-(11E)-octadecenoyloxy]acyl-beta-D-glucosyl-(1&lt;-&gt;1)-sphing-4E-enine + NAD(+) = a N-[omega-(9R,10R)-epoxy-13-oxo-(11E)-octadecenoyloxy]acyl-beta-D-glucosyl-(1&lt;-&gt;1)-sphing-4E-enine + NADH + H(+). It catalyses the reaction a N-[omega-(9R,10R)-epoxy-(13R)-hydroxy-(11E)-octadecenoyloxy]-acylsphing-4E-enine + NAD(+) = a N-[omega-(9R,10R)-epoxy-13-oxo-(11E)-octadecenoyloxy]-acylsphing-4E-enine + NADH + H(+). Plays a crucial role in the formation of the epidermal permeability barrier. Catalyzes the NAD+-dependent dehydrogenation of the linoleate 9,10-trans-epoxy-11E-13-alcohol esterified in omega-O-acylceramides (such as in N-[omega-(9R,10R)-epoxy-(13R)-hydroxy-(11E)-octadecenoyloxy]-acylsphing-4E-enine) to the corresponding 13-ketone, the reactive moiety required for binding of epidermal ceramides to proteins. Displays weak conversion of all-trans-retinal to all-trans-retinol in the presence of NADH. Has apparently no steroid dehydrogenase activity. In Mus musculus (Mouse), this protein is Short-chain dehydrogenase/reductase family 9C member 7 (Sdr9c7).